The primary structure comprises 500 residues: ADP,ATP carrier protein 5 (500 aa).

Helical transmembrane passes span 21–41 (IYNY…CILF), 62–82 (IAGF…VIIY), 94–114 (IFYY…FVIY), 149–169 (YIVY…LLFW), 184–204 (FYTL…FLMM), 224–244 (ITLV…CCLL), 287–307 (LWLL…VEAV), 328–348 (LYIL…NNVM), 357–377 (AVIS…LIVF), 381–401 (ILSL…VSIG), and 469–489 (SISP…IYAV).

Belongs to the ADP/ATP translocase tlc family.

It localises to the cell membrane. Functionally, provides the rickettsial cell with host ATP in exchange for rickettsial ADP. This is an obligate exchange system. This energy acquiring activity is an important component of rickettsial parasitism. This chain is ADP,ATP carrier protein 5 (tlcE), found in Rickettsia bellii (strain RML369-C).